Here is a 314-residue protein sequence, read N- to C-terminus: Leucine-rich repeat-containing protein 52 (314 aa).

Residues 1–23 form the signal peptide; it reads MSLASGPSSKLLLFSLGMGLVSG. The 30-residue stretch at 24-53 folds into the LRRNT domain; it reads SKCPNKCVCQDQEVACIDLHLTEYPADIPL. Topologically, residues 24–244 are extracellular; it reads SKCPNKCVCQ…MCITHLDQQD (221 aa). Intrachain disulfides connect C26–C32 and C30–C39. LRR repeat units follow at residues 54 to 73, 78 to 99, 102 to 123, 126 to 148, and 151 to 172; these read NTRRLYLNNNKITSLPALQL, DLVYLDCQNNRIREVMDYTFIG, RLIYLDLSSNNLTSISPFSFSV, NLVRLNISHNPHLLYLDKYVFAN, and SLRYLDLRNTGLHIIDHNGFHH. N-linked (GlcNAc...) asparagine glycans are attached at residues N112, N131, and N148. In terms of domain architecture, LRRCT spans 184-238; it reads NPWICNCSFLDFTIHLLVSHMDHPDAQNATCTEPAELKGWPITKVGNPLQYMCIT. Intrachain disulfides connect C188–C214 and C190–C236. N-linked (GlcNAc...) asparagine glycosylation is found at N189 and N211. Residues 245–265 form a helical membrane-spanning segment; it reads YIFLLLIGFCIFAAGTVAAWL. Residues 266–314 are Cytoplasmic-facing; sequence TGVCAVLYQNALRTSSGDDTEDETGSRFANQIFRSNTHLGPIRRFPELI.

Interacts with KCNMA1. Interacts with KCNU1; this interaction may be required for LRRC52 stability and changes the channel gating properties. N-glycosylated. In terms of tissue distribution, testis-specific (at protein level). At the mRNA level, also detected in kidney, ventricle, spinal cord and skeletal muscle, although at lower levels compared to testis. Expression in testis at the protein level requires the presence of KCNU1.

It is found in the cell membrane. In terms of biological role, auxiliary protein of the large-conductance, voltage and calcium-activated potassium channel (BK alpha). Modulates gating properties by producing a marked shift in the BK channel's voltage dependence of activation in the hyperpolarizing direction, and in the absence of calcium. KCNU1 channel auxiliary protein. Modulates KCNU1 gating properties, shifting KCNU1 gating to more negative potentials at a given pH. The chain is Leucine-rich repeat-containing protein 52 (Lrrc52) from Mus musculus (Mouse).